A 340-amino-acid polypeptide reads, in one-letter code: 7,8-didemethyl-8-hydroxy-5-deazariboflavin synthase (340 aa).

In terms of domain architecture, Radical SAM core spans 25 to 256; it reads ATYSPAYTIV…SDITIQIPPN (232 aa). 3 residues coordinate [4Fe-4S] cluster: C39, C43, and C46.

This sequence belongs to the radical SAM superfamily. CofG family. As to quaternary structure, consists of two subunits, CofG and CofH. [4Fe-4S] cluster serves as cofactor.

It carries out the reaction 5-amino-5-(4-hydroxybenzyl)-6-(D-ribitylimino)-5,6-dihydrouracil + S-adenosyl-L-methionine = 7,8-didemethyl-8-hydroxy-5-deazariboflavin + 5'-deoxyadenosine + L-methionine + NH4(+) + H(+). It participates in cofactor biosynthesis; coenzyme F0 biosynthesis. In terms of biological role, catalyzes the radical-mediated synthesis of 7,8-didemethyl-8-hydroxy-5-deazariboflavin from 5-amino-5-(4-hydroxybenzyl)-6-(D-ribitylimino)-5,6-dihydrouracil. The protein is 7,8-didemethyl-8-hydroxy-5-deazariboflavin synthase of Trichormus variabilis (strain ATCC 29413 / PCC 7937) (Anabaena variabilis).